Consider the following 264-residue polypeptide: Late embryogenesis abundant protein D-34 (264 aa).

Residues 1–16 show a composition bias toward low complexity; that stretch reads MSQGQPRRPQQPAGQG. Positions 1-23 are disordered; the sequence is MSQGQPRRPQQPAGQGENQEPIK. 3 SMP domains span residues 22 to 76, 138 to 194, and 203 to 261; these read IKYG…RNEQ, ITIG…AHNA, and IKLN…LNEN.

The protein belongs to the LEA type SMP family.

In terms of biological role, LEA proteins are late embryonic proteins abundant in higher plant seed embryos. There are two subsets of LEA proteins (5a and 5b), the first ones are expressed when the cotyledon weight reach 80 mg and the second set are expressed above 100 mg. The function of those proteins is not known. The sequence is that of Late embryogenesis abundant protein D-34 from Gossypium hirsutum (Upland cotton).